The primary structure comprises 90 residues: Small ribosomal subunit protein bS16 (90 aa).

It belongs to the bacterial ribosomal protein bS16 family.

This Fervidobacterium nodosum (strain ATCC 35602 / DSM 5306 / Rt17-B1) protein is Small ribosomal subunit protein bS16.